Reading from the N-terminus, the 477-residue chain is Ribulose bisphosphate carboxylase large chain (477 aa).

The propeptide occupies 1-2 (MS). Pro3 carries the post-translational modification N-acetylproline. Lys14 is modified (N6,N6,N6-trimethyllysine). The substrate site is built by Asn123 and Thr173. Lys175 functions as the Proton acceptor in the catalytic mechanism. Position 177 (Lys177) interacts with substrate. Positions 201, 203, and 204 each coordinate Mg(2+). Residue Lys201 is modified to N6-carboxylysine. His294 functions as the Proton acceptor in the catalytic mechanism. The substrate site is built by Arg295, His327, and Ser379.

The protein belongs to the RuBisCO large chain family. Type I subfamily. Heterohexadecamer of 8 large chains and 8 small chains; disulfide-linked. The disulfide link is formed within the large subunit homodimers. Mg(2+) is required as a cofactor. In terms of processing, the disulfide bond which can form in the large chain dimeric partners within the hexadecamer appears to be associated with oxidative stress and protein turnover.

The protein resides in the plastid. It localises to the chloroplast. It catalyses the reaction 2 (2R)-3-phosphoglycerate + 2 H(+) = D-ribulose 1,5-bisphosphate + CO2 + H2O. The enzyme catalyses D-ribulose 1,5-bisphosphate + O2 = 2-phosphoglycolate + (2R)-3-phosphoglycerate + 2 H(+). In terms of biological role, ruBisCO catalyzes two reactions: the carboxylation of D-ribulose 1,5-bisphosphate, the primary event in carbon dioxide fixation, as well as the oxidative fragmentation of the pentose substrate in the photorespiration process. Both reactions occur simultaneously and in competition at the same active site. The sequence is that of Ribulose bisphosphate carboxylase large chain (rbcL) from Solanum lycopersicum (Tomato).